A 166-amino-acid chain; its full sequence is NAD(P)H-quinone oxidoreductase subunit I, chloroplastic (166 aa).

4Fe-4S ferredoxin-type domains are found at residues 55–84 (GRIHFEFDKCIACEVCVRVCPIDLPVVDWK) and 95–124 (LNYSIDFGICIFCGNCVEYCPTNCLSMTEE). [4Fe-4S] cluster is bound by residues cysteine 64, cysteine 67, cysteine 70, cysteine 74, cysteine 104, cysteine 107, cysteine 110, and cysteine 114.

The protein belongs to the complex I 23 kDa subunit family. In terms of assembly, NDH is composed of at least 16 different subunits, 5 of which are encoded in the nucleus. [4Fe-4S] cluster serves as cofactor.

The protein localises to the plastid. Its subcellular location is the chloroplast thylakoid membrane. It carries out the reaction a plastoquinone + NADH + (n+1) H(+)(in) = a plastoquinol + NAD(+) + n H(+)(out). It catalyses the reaction a plastoquinone + NADPH + (n+1) H(+)(in) = a plastoquinol + NADP(+) + n H(+)(out). In terms of biological role, NDH shuttles electrons from NAD(P)H:plastoquinone, via FMN and iron-sulfur (Fe-S) centers, to quinones in the photosynthetic chain and possibly in a chloroplast respiratory chain. The immediate electron acceptor for the enzyme in this species is believed to be plastoquinone. Couples the redox reaction to proton translocation, and thus conserves the redox energy in a proton gradient. This Melampodium leucanthum (Black foot daisy) protein is NAD(P)H-quinone oxidoreductase subunit I, chloroplastic.